A 434-amino-acid polypeptide reads, in one-letter code: Nicotinate phosphoribosyltransferase (434 aa).

Position 242 is a phosphohistidine; by autocatalysis (His-242).

This sequence belongs to the NAPRTase family. Transiently phosphorylated on a His residue during the reaction cycle. Phosphorylation strongly increases the affinity for substrates and increases the rate of nicotinate D-ribonucleotide production. Dephosphorylation regenerates the low-affinity form of the enzyme, leading to product release.

The catalysed reaction is nicotinate + 5-phospho-alpha-D-ribose 1-diphosphate + ATP + H2O = nicotinate beta-D-ribonucleotide + ADP + phosphate + diphosphate. The protein operates within cofactor biosynthesis; NAD(+) biosynthesis; nicotinate D-ribonucleotide from nicotinate: step 1/1. Functionally, catalyzes the synthesis of beta-nicotinate D-ribonucleotide from nicotinate and 5-phospho-D-ribose 1-phosphate at the expense of ATP. The protein is Nicotinate phosphoribosyltransferase of Bradyrhizobium sp. (strain BTAi1 / ATCC BAA-1182).